Here is a 719-residue protein sequence, read N- to C-terminus: Catalase-3 (719 aa).

An N-terminal signal peptide occupies residues 1 to 18 (MRVNALLPLSGLIGTALA). Positions 19-30 (ACPFADPSALGR) are excised as a propeptide. Catalysis depends on residues H102 and N175. Position 389 (Y389) interacts with heme.

The protein belongs to the catalase family. The cofactor is heme.

The catalysed reaction is 2 H2O2 = O2 + 2 H2O. Functionally, occurs in almost all aerobically respiring organisms and serves to protect cells from the toxic effects of hydrogen peroxide. The chain is Catalase-3 (cat-3) from Neurospora crassa (strain ATCC 24698 / 74-OR23-1A / CBS 708.71 / DSM 1257 / FGSC 987).